Reading from the N-terminus, the 513-residue chain is Na(+)/H(+) antiporter NhaB (513 aa).

Transmembrane regions (helical) follow at residues 23–43 (LALI…PFVA), 52–72 (IFTL…LLAI), 97–117 (LLLM…LFIF), 120–140 (LLLS…AAAF), 144–164 (FLDA…FYGI), 202–222 (LMMH…VGEP), 238–258 (FFLR…LTCL), 303–323 (AIIG…VGLI), 348–368 (TESL…AVII), 391–411 (LFYI…VGTI), 447–467 (ATPN…APLI), and 475–495 (VWMA…CVEF).

The protein belongs to the NhaB Na(+)/H(+) (TC 2.A.34) antiporter family.

It is found in the cell inner membrane. It carries out the reaction 2 Na(+)(in) + 3 H(+)(out) = 2 Na(+)(out) + 3 H(+)(in). In terms of biological role, na(+)/H(+) antiporter that extrudes sodium in exchange for external protons. This chain is Na(+)/H(+) antiporter NhaB, found in Escherichia coli O127:H6 (strain E2348/69 / EPEC).